A 62-amino-acid chain; its full sequence is Large ribosomal subunit protein uL30 (62 aa).

Belongs to the universal ribosomal protein uL30 family. In terms of assembly, part of the 50S ribosomal subunit.

The protein is Large ribosomal subunit protein uL30 of Heliobacterium modesticaldum (strain ATCC 51547 / Ice1).